The sequence spans 432 residues: Adenylosuccinate synthetase (432 aa).

GTP is bound by residues Gly-12 to Lys-18 and Gly-40 to Thr-42. Residue Asp-13 is the Proton acceptor of the active site. Positions 13 and 40 each coordinate Mg(2+). IMP-binding positions include Asp-13 to Lys-16, Asn-38 to His-41, Thr-129, Arg-143, Gln-224, Thr-239, and Arg-303. His-41 (proton donor) is an active-site residue. Val-299–Arg-305 lines the substrate pocket. Residues Arg-305, Lys-331–Asp-333, and Gly-413–Gly-415 each bind GTP.

This sequence belongs to the adenylosuccinate synthetase family. Homodimer. Mg(2+) is required as a cofactor.

The protein localises to the cytoplasm. The enzyme catalyses IMP + L-aspartate + GTP = N(6)-(1,2-dicarboxyethyl)-AMP + GDP + phosphate + 2 H(+). It participates in purine metabolism; AMP biosynthesis via de novo pathway; AMP from IMP: step 1/2. Functionally, plays an important role in the de novo pathway of purine nucleotide biosynthesis. Catalyzes the first committed step in the biosynthesis of AMP from IMP. This chain is Adenylosuccinate synthetase, found in Mycobacterium marinum (strain ATCC BAA-535 / M).